The following is a 332-amino-acid chain: MAFVPAPGYQPTYNPTLPYHNPIPGGLRVGMSVYIQGVASEHMKRFFVNFEVGQGQGADVAFHFNPRFDGWDKVVLNSKQNGSWGQEERKMSMPFRKGAAFELVFMVMTEHFKVVVNGTPFHEFKHRIPLQMVTHLHVDGDLMLQSINFIGGQPPSNQMPMPAQAYPMPMSAQAYPSPGQYYQQQSRLPTMEGPPAFNPPVPFNGRLQGGLIVRRTIIIKGYIPPTAKSFVINFKVGSSGDVALHINPRMTEGAVVRNSFLNGSWGSEERKVSYNPFGPGQFFDLSVRCGADRFKVYANGKHLFDFSHRLSAFQRVDLVEIHGDVTLSYVQI.

2 consecutive Galectin domains span residues Tyr19–Ile150 and Phe203–Ile332. Residue Trp265 to Lys271 coordinates a beta-D-galactoside. At Ser267 the chain carries Phosphoserine.

As to quaternary structure, monomer.

Functionally, galectin that binds lactose and a related range of sugars. May be involved in the assembly of adherens junctions. This chain is Galectin-4 (LGALS4), found in Bos taurus (Bovine).